The primary structure comprises 463 residues: tRNA (guanine(10)-N(2))-methyltransferase TRMT11 (463 aa).

Residue A2 is modified to N-acetylalanine.

The protein belongs to the class I-like SAM-binding methyltransferase superfamily. TRM11 methyltransferase family. In terms of assembly, part of the heterodimeric TRMT11-TRM112 methyltransferase complex; this complex forms an active tRNA methyltransferase, where TRMT112 acts as an activator of the catalytic subunit TRMT11.

The protein resides in the cytoplasm. The catalysed reaction is guanosine(10) in tRNA + S-adenosyl-L-methionine = N(2)-methylguanosine(10) in tRNA + S-adenosyl-L-homocysteine + H(+). Functionally, catalytic subunit of the TRMT11-TRM112 methyltransferase complex, that specifically mediates the S-adenosyl-L-methionine-dependent N(2)-methylation of guanosine nucleotide at position 10 (m2G10) in tRNAs. This is one of the major tRNA (guanine-N(2))-methyltransferases. The sequence is that of tRNA (guanine(10)-N(2))-methyltransferase TRMT11 from Rattus norvegicus (Rat).